The sequence spans 76 residues: Sulfur carrier protein TusA (76 aa).

Cys15 functions as the Cysteine persulfide intermediate in the catalytic mechanism.

This sequence belongs to the sulfur carrier protein TusA family. As to quaternary structure, mostly a monomer, a small portion forms homodimer via intermolecular disulfide bonds. Tightly interacts with DsrEFH.

It is found in the cytoplasm. Its pathway is energy metabolism; sulfur metabolism. Its function is as follows. Sulfur carrier protein involved in sulfur trafficking for oxidative dissimilatory sulfur metabolism. Component of a sulfur relay system that starts with the sulfur-mobilizing rhodanese-like protein Rhd_2599 (Alvin_2599), which transfers the sulfur from a low-molecular-weight thiol, maybe glutathione, to the TusA protein (Alvin_2600); TusA serves as the sulfur donor for DsrEFH, which persulfurates DsrC; persulfurated DsrC very probably serves as a direct substrate for reverse-acting sulfite reductase, DsrAB. TusA seems to be not exclusively dedicated to sulfur oxidation and may have other important roles in the cell. Might also act as a sulfur mediator required for 2-thiouridine formation of tRNA. This Allochromatium vinosum (strain ATCC 17899 / DSM 180 / NBRC 103801 / NCIMB 10441 / D) (Chromatium vinosum) protein is Sulfur carrier protein TusA.